Here is a 100-residue protein sequence, read N- to C-terminus: Serine protease inhibitor 1 protein (100 aa).

Positions Met1–Cys20 are cleaved as a signal peptide. Disulfide bonds link Cys42/Cys74, Cys51/Cys69, Cys54/Cys65, Cys58/Cys93, and Cys76/Cys90. In terms of domain architecture, TIL spans Cys42–Cys93.

Its subcellular location is the secreted. The protein is Serine protease inhibitor 1 protein of Caenorhabditis elegans.